The chain runs to 110 residues: V-type proton ATPase subunit F (110 aa).

Belongs to the V-ATPase F subunit family. In terms of assembly, V-ATPase is a heteromultimeric enzyme made up of two complexes: the ATP-hydrolytic V1 complex and the proton translocation V0 complex. The V1 complex consists of three catalytic AB heterodimers that form a heterohexamer, three peripheral stalks each consisting of EG heterodimers, one central rotor including subunits D and F, and the regulatory subunits C and H. The proton translocation complex V0 consists of the proton transport subunit a, a ring of proteolipid subunits c9c'', rotary subunit d, subunits e and f, and two accessory subunits.

Functionally, subunit of the V1 complex of vacuolar(H+)-ATPase (V-ATPase), a multisubunit enzyme composed of a peripheral complex (V1) that hydrolyzes ATP and a membrane integral complex (V0) that translocates protons. V-ATPase is responsible for acidifying and maintaining the pH of intracellular compartments and in some cell types, is targeted to the plasma membrane, where it is responsible for acidifying the extracellular environment. The polypeptide is V-type proton ATPase subunit F (atp6s14) (Xenopus laevis (African clawed frog)).